The sequence spans 602 residues: MTDIPVARLRNFCIIAHIDHGKSTLADRLLQETGTVSSRDMQEQFLDNMDLERERGITIKLQAARMNYCASDGEQYVLNLIDTPGHVDFSYEVSRSLQACEGALLVVDASQGVEAQTLANVYLALENDLEIIPVLNKVDLPGADSERIKQEIESIIGLDTSTAIECSAKTGIGIPEILQSVVDRIPPPKDLLNDPTKALIFDSYYDSYRGVIVYFRVMTGSISRRDKILLMASRKSYELDEIGIMSPDQRKVEDLHAGEVGYLSASIKAVADARVGDTITLVDDSASEPLPGYTEAKPMVFCGLFPTDADQYPDLREALDKLQLSDAALKYEPETSSAMGFGFRCGFLGLLHMEIVQERLEREYDLDLIVTAPSVIYQVNMIGGETLLIDNPATLPDPQKRESIEEPYVRIEIYAPNEYNGTLMGLCQDRRGDFVDMKFITTDRVTLIYEIPLAEVVTDFFDHMKSRTKGYASMEYHLIGYRENDLVRLDVLINAERADPLTTIVHREKAYGVGRGLVEKLKELIPKQQFKIPLQASIGSRIIASESISALRKDVLAKCYGGDISRKKKLLKKQAKGKKRMKSMGKVDVPQEAFMAVLKLNQ.

The tr-type G domain occupies 7–189 (ARLRNFCIIA…SVVDRIPPPK (183 aa)). Residues 19–24 (DHGKST) and 136–139 (NKVD) contribute to the GTP site.

It belongs to the TRAFAC class translation factor GTPase superfamily. Classic translation factor GTPase family. LepA subfamily.

Its subcellular location is the cell inner membrane. It catalyses the reaction GTP + H2O = GDP + phosphate + H(+). Functionally, required for accurate and efficient protein synthesis under certain stress conditions. May act as a fidelity factor of the translation reaction, by catalyzing a one-codon backward translocation of tRNAs on improperly translocated ribosomes. Back-translocation proceeds from a post-translocation (POST) complex to a pre-translocation (PRE) complex, thus giving elongation factor G a second chance to translocate the tRNAs correctly. Binds to ribosomes in a GTP-dependent manner. This Prochlorococcus marinus (strain SARG / CCMP1375 / SS120) protein is Elongation factor 4.